The sequence spans 439 residues: Ectonucleotide pyrophosphatase/phosphodiesterase family member 7 (439 aa).

Positions 1–21 (MGHSAVLLSVALVILPACVTG) are cleaved as a signal peptide. The Extracellular segment spans residues 22-422 (GPVQRQQQHK…RSGSPLSRQH (401 aa)). D38 and T74 together coordinate Zn(2+). The interval 71-77 (VTMTSPC) is required for enzyme activity. T74 acts as the Nucleophile in catalysis. N95 is a binding site for substrate. 4 N-linked (GlcNAc...) asparagine glycosylation sites follow: N99, N120, N145, and N167. Zn(2+) contacts are provided by D198, H202, D245, and H246. N266 carries an N-linked (GlcNAc...) asparagine glycan. H352 is a Zn(2+) binding site. Residues 423–439 (HLVVVLMGILTGLAKVV) form a helical membrane-spanning segment.

The protein belongs to the nucleotide pyrophosphatase/phosphodiesterase family. Zn(2+) serves as cofactor. N-glycosylated; required for activity and transport to the plasma membrane. Detected in small intestine (at protein level). Highly expressed in the jejunum.

It is found in the cell membrane. It carries out the reaction a sphingomyelin + H2O = phosphocholine + an N-acylsphing-4-enine + H(+). The enzyme catalyses a 1-O-alkyl-2-acetyl-sn-glycero-3-phosphocholine + H2O = a 1-O-alkyl-2-acetyl-sn-glycerol + phosphocholine + H(+). It catalyses the reaction 1-O-octadecyl-2-acetyl-sn-glycero-3-phosphocholine + H2O = 1-O-octadecyl-2-acetyl-sn-glycerol + phosphocholine + H(+). The catalysed reaction is 1-hexadecanoyl-sn-glycero-3-phosphocholine + H2O = 1-hexadecanoyl-sn-glycerol + phosphocholine + H(+). Platelet-activating factor hydrolysis is inhibited by higher amount of sphingomyelin. The hydrolysis of platelet-activating factor and sphingomyelin can be inhibited by the presence of sphingomyelin and platelet-activating factor respectively, the inhibition of platelet-activating factor hydrolysis by sphingomyelin being stronger. PAF hydrolysis is dose-dependently increased by both taurocholate (TC) and taurodeoxycholate (TDC). Hydrolase activity against PAF is inhibited by EDTA and stimulated by 0.1-0.25 mM Zn2+. Its function is as follows. Choline-specific phosphodiesterase that hydrolyzes sphingomyelin (SM) releasing the ceramide and phosphocholine and therefore is involved in sphingomyelin digestion, ceramide formation, and fatty acid (FA) absorption in the gastrointestinal tract. Also has phospholipase C activity and can also cleave phosphocholine from palmitoyl lyso-phosphatidylcholine and platelet-activating factor (PAF) leading to its inactivation. Does not have nucleotide pyrophosphatase activity. May promote cholesterol absorption by affecting the levels of sphingomyelin derived from either diet or endogenous sources, in the intestinal lumen. The chain is Ectonucleotide pyrophosphatase/phosphodiesterase family member 7 from Rattus norvegicus (Rat).